The following is a 359-amino-acid chain: MAFNGTVPSFCMDFTVYKVTISVILIILILVTVAGNVVVCLAVGLNRRLRSLTNCFIVSLAVTDLLLGLLVLPFSAIYQLSCKWSFSKVFCNIYTSLDVMLCTASILNLFMISLDRYCAVTDPLRYPVLITPARVAISLVFIWVISITLSFLSIHLGWNSRNETSKDNDTIVKCKVQVNEVYGLVDGLVTFYLPLLIMCITYFRIFKIAREQARRINHIGSWKAATIREHKATVTLAAVMGAFIICWFPYFTVFVYRGLKGDDAVNEVFEDVVLWLGYANSALNPILYAALNRDFRTAYHQLFCCRLASHNSHETSLRLNNSQLNRSQCQEPRWQEDKPLNLQVWSGTEVTAPQGATNR.

The Extracellular portion of the chain corresponds to methionine 1–serine 22. An N-linked (GlcNAc...) asparagine glycan is attached at asparagine 4. A helical membrane pass occupies residues valine 23 to glycine 44. Topologically, residues leucine 45–isoleucine 57 are cytoplasmic. A helical membrane pass occupies residues valine 58 to serine 81. Over cysteine 82–asparagine 92 the chain is Extracellular. Cysteine 91 and cysteine 174 form a disulfide bridge. The helical transmembrane segment at isoleucine 93 to leucine 114 threads the bilayer. Topologically, residues aspartate 115–arginine 134 are cytoplasmic. A helical membrane pass occupies residues valine 135–asparagine 159. The Extracellular segment spans residues serine 160 to glutamate 180. A helical membrane pass occupies residues valine 181–arginine 204. Topologically, residues isoleucine 205 to valine 234 are cytoplasmic. The helical transmembrane segment at threonine 235–glycine 258 threads the bilayer. The Extracellular portion of the chain corresponds to leucine 259–glutamate 267. The chain crosses the membrane as a helical span at residues valine 268–alanine 289. Topologically, residues alanine 290–arginine 359 are cytoplasmic. Cysteine 305 is lipidated: S-palmitoyl cysteine.

It belongs to the G-protein coupled receptor 1 family.

Its subcellular location is the cell membrane. Functionally, the H2 subclass of histamine receptors mediates gastric acid secretion. The activity of this receptor is mediated by G proteins which activate adenylyl cyclase. The protein is Histamine H2 receptor (HRH2) of Cavia porcellus (Guinea pig).